A 410-amino-acid polypeptide reads, in one-letter code: Cysteine desulfurase IscS (410 aa).

Pyridoxal 5'-phosphate is bound by residues 80–81 (AT), Asn160, Gln188, and 208–210 (SGH). Position 211 is an N6-(pyridoxal phosphate)lysine (Lys211). Thr248 contacts pyridoxal 5'-phosphate. The active-site Cysteine persulfide intermediate is Cys334. Residue Cys334 participates in [2Fe-2S] cluster binding.

This sequence belongs to the class-V pyridoxal-phosphate-dependent aminotransferase family. NifS/IscS subfamily. Homodimer. Forms a heterotetramer with IscU, interacts with other sulfur acceptors. The cofactor is pyridoxal 5'-phosphate.

Its subcellular location is the cytoplasm. It catalyses the reaction (sulfur carrier)-H + L-cysteine = (sulfur carrier)-SH + L-alanine. The protein operates within cofactor biosynthesis; iron-sulfur cluster biosynthesis. In terms of biological role, master enzyme that delivers sulfur to a number of partners involved in Fe-S cluster assembly, tRNA modification or cofactor biosynthesis. Catalyzes the removal of elemental sulfur atoms from cysteine to produce alanine. Functions as a sulfur delivery protein for Fe-S cluster synthesis onto IscU, an Fe-S scaffold assembly protein, as well as other S acceptor proteins. This Rickettsia felis (strain ATCC VR-1525 / URRWXCal2) (Rickettsia azadi) protein is Cysteine desulfurase IscS.